The following is a 568-amino-acid chain: MTEIKDSSVKDENPGKQEESSIAVESREMSTATNNSKNIETTSSNGAEDIKIQRDVGDDKDLDDKEANDKSSKGLEEESDSKDRKTIETDQPSNNIGDIKSQKSEKSNGNARKETKQSERVNYKPGMRVLTKMSGFPWWPSMVVTESKMTSVARKSKPKRAGTFYPVIFFPNKEYLWTGSDSLTPLTSEAISQFLEKPKPKTASLIKAYKMAQSTPDLDSLSVPSSESEVSEEESDQEMSEPSPIEEDYNDTKARRITRKGTKKKTVTFDPSLESVPQKRLNASSNVSSNPAKKTRVSPRRSTAASKKKSPSSKRASSDEIEKDKEEEEGSVANEEDVAKRTFHSREQSLLFLRHKLQSSLLSPKQDLSQVDYKLVHNYLDKLANFQGIDVPLIQKTKIAVVVRKIFSLAGLPKENEDEVKSICGDILENRWKSLLQEISSQKQLSTDASQTQDASIANENETEIASLDEGSESKPTPSPPAEQLTDQKQNEDNEDKVKADSNGPTQNENETADASKDMISEEKSSKDADNSLEVAGKDFAEDGTEQTPNLAEPEDGVAAVDLSTGQK.

A compositionally biased stretch (basic and acidic residues) spans 1–19; the sequence is MTEIKDSSVKDENPGKQEE. Disordered regions lie at residues 1–126, 213–340, and 465–568; these read MTEI…YKPG, QSTP…DVAK, and IASL…TGQK. A compositionally biased stretch (polar residues) spans 29–46; the sequence is MSTATNNSKNIETTSSNG. Composition is skewed to basic and acidic residues over residues 48 to 88 and 100 to 122; these read EDIK…KTIE and KSQK…ERVN. In terms of domain architecture, PWWP spans 125-189; that stretch reads PGMRVLTKMS…SDSLTPLTSE (65 aa). A compositionally biased stretch (low complexity) spans 214 to 228; the sequence is STPDLDSLSVPSSES. Residues 229–249 are compositionally biased toward acidic residues; the sequence is EVSEEESDQEMSEPSPIEEDY. Residues 255–266 are compositionally biased toward basic residues; it reads RRITRKGTKKKT. The span at 281–292 shows a compositional bias: polar residues; it reads LNASSNVSSNPA. Acidic residues predominate over residues 325 to 336; that stretch reads KEEEEGSVANEE. Basic and acidic residues-rich tracts occupy residues 489–500 and 514–541; these read KQNEDNEDKVKA and DASK…KDFA.

The protein is PWWP domain-containing protein2 (pdp2) of Schizosaccharomyces pombe (strain 972 / ATCC 24843) (Fission yeast).